A 276-amino-acid polypeptide reads, in one-letter code: MLLRFTKMHGLGNDFMVLDLVSQHAHILPKHAKQWGDRHTGIGFDQLLLVEAPNNPDVDFRYRIFNSDGSEVEQCGNGARCFARFVLDKRLTAKKQIRVETKSGIIELDIRSDGQISVDMGPPRFVPEEIPFEAAEQATRYNVEVDGQNIELAAVSMGNPHAVLRVDDINNAPVHELGPKIEHHPRFPARVNVGFLHVVDRQRAQLRVWERGAGETQACGTGACAAAVAAISQGWMDSPLLIDLPGGRLSIEWAGPGHSVMMTGPAVRVYEGQVRL.

N13, Q46, and N66 together coordinate substrate. Catalysis depends on C75, which acts as the Proton donor. Residues G76–N77, N159, N192, and E210–R211 each bind substrate. C219 functions as the Proton acceptor in the catalytic mechanism. Substrate is bound at residue G220–T221.

This sequence belongs to the diaminopimelate epimerase family. Homodimer.

Its subcellular location is the cytoplasm. The enzyme catalyses (2S,6S)-2,6-diaminopimelate = meso-2,6-diaminopimelate. The protein operates within amino-acid biosynthesis; L-lysine biosynthesis via DAP pathway; DL-2,6-diaminopimelate from LL-2,6-diaminopimelate: step 1/1. Functionally, catalyzes the stereoinversion of LL-2,6-diaminopimelate (L,L-DAP) to meso-diaminopimelate (meso-DAP), a precursor of L-lysine and an essential component of the bacterial peptidoglycan. The sequence is that of Diaminopimelate epimerase from Pseudomonas savastanoi pv. phaseolicola (strain 1448A / Race 6) (Pseudomonas syringae pv. phaseolicola (strain 1448A / Race 6)).